The sequence spans 210 residues: ATP-dependent Clp protease proteolytic subunit (210 aa).

Catalysis depends on Ser107, which acts as the Nucleophile. The active site involves His132.

It belongs to the peptidase S14 family. As to quaternary structure, fourteen ClpP subunits assemble into 2 heptameric rings which stack back to back to give a disk-like structure with a central cavity, resembling the structure of eukaryotic proteasomes.

The protein localises to the cytoplasm. It catalyses the reaction Hydrolysis of proteins to small peptides in the presence of ATP and magnesium. alpha-casein is the usual test substrate. In the absence of ATP, only oligopeptides shorter than five residues are hydrolyzed (such as succinyl-Leu-Tyr-|-NHMec, and Leu-Tyr-Leu-|-Tyr-Trp, in which cleavage of the -Tyr-|-Leu- and -Tyr-|-Trp bonds also occurs).. Functionally, cleaves peptides in various proteins in a process that requires ATP hydrolysis. Has a chymotrypsin-like activity. Plays a major role in the degradation of misfolded proteins. This is ATP-dependent Clp protease proteolytic subunit from Azorhizobium caulinodans (strain ATCC 43989 / DSM 5975 / JCM 20966 / LMG 6465 / NBRC 14845 / NCIMB 13405 / ORS 571).